The chain runs to 449 residues: Tubulin alpha chain (449 aa).

Residues glutamine 11, glutamate 71, serine 140, glycine 144, threonine 145, threonine 179, asparagine 206, and asparagine 228 each coordinate GTP. Glutamate 71 is a Mg(2+) binding site. Glutamate 254 is an active-site residue.

It belongs to the tubulin family. In terms of assembly, dimer of alpha and beta chains. A typical microtubule is a hollow water-filled tube with an outer diameter of 25 nm and an inner diameter of 15 nM. Alpha-beta heterodimers associate head-to-tail to form protofilaments running lengthwise along the microtubule wall with the beta-tubulin subunit facing the microtubule plus end conferring a structural polarity. Microtubules usually have 13 protofilaments but different protofilament numbers can be found in some organisms and specialized cells. Mg(2+) serves as cofactor.

It localises to the cytoplasm. The protein localises to the cytoskeleton. The catalysed reaction is GTP + H2O = GDP + phosphate + H(+). Its function is as follows. Tubulin is the major constituent of microtubules, a cylinder consisting of laterally associated linear protofilaments composed of alpha- and beta-tubulin heterodimers. Microtubules grow by the addition of GTP-tubulin dimers to the microtubule end, where a stabilizing cap forms. Below the cap, tubulin dimers are in GDP-bound state, owing to GTPase activity of alpha-tubulin. This Sordaria macrospora (strain ATCC MYA-333 / DSM 997 / K(L3346) / K-hell) protein is Tubulin alpha chain (TUBA).